A 117-amino-acid polypeptide reads, in one-letter code: UPF0102 protein RSKD131_0118 (117 aa).

The protein belongs to the UPF0102 family.

This is UPF0102 protein RSKD131_0118 from Cereibacter sphaeroides (strain KD131 / KCTC 12085) (Rhodobacter sphaeroides).